The following is a 510-amino-acid chain: MIWHVQNENFILDSTRIFMKAFHLLLFDGSFIFPECILIFGLILLLMIDSTSDQKDRPWFYFISSTSLVMSIAALLFRWREEPMISFSGNFQTNNFNEIFQFLILLCSTLCIPLSVEYIECTEMAITEFLLFVLTATLGGMFLCGANDSITIFVAPECFSLCSYLLSGYTKRDVRSNEATMKYLLMGGASSSILVHGFSWLYGLSGGEIELQEIVNGLINTQMYNSPGISIALIFITVGIGFKLSLAPFHQWTPDVYEGSPTPVVAFLSVTSKVAASASATRIFDIPFYFSSNEWHLLLEILAILSMILGNLIAITQTSMKRMLAYSSIGQIGYVIIGIIVGDSNDGYASMITYMLFYISMNLGTFARIVLFGLRTGTDNIRDYAGLYTKDPFLALSLALCLLSLGGLPPLAGFFGKLHLFWCGWQAGLYFLVSIGLLTSVVSIYYYLKIIKLLMTGRNQEITPHVRNYRRSPLRSNNSIELSMIVCVIASTIPGISMNPILAIAQDTLF.

A run of 13 helical transmembrane segments spans residues 24–44 (LLLFDGSFIFPECILIFGLIL), 59–79 (WFYFISSTSLVMSIAALLFRW), 99–119 (IFQFLILLCSTLCIPLSVEYI), 124–144 (MAITEFLLFVLTATLGGMFLC), 150–170 (ITIFVAPECFSLCSYLLSGYT), 184–204 (LLMGGASSSILVHGFSWLYGL), 229–249 (ISIALIFITVGIGFKLSLAPF), 295–315 (WHLLLEILAILSMILGNLIAI), 323–343 (MLAYSSIGQIGYVIIGIIVGD), 354–374 (YMLFYISMNLGTFARIVLFGL), 395–415 (ALSLALCLLSLGGLPPLAGFF), 418–438 (LHLFWCGWQAGLYFLVSIGLL), and 484–504 (MIVCVIASTIPGISMNPILAI).

Belongs to the complex I subunit 2 family. NDH is composed of at least 16 different subunits, 5 of which are encoded in the nucleus.

It is found in the plastid. It localises to the chloroplast thylakoid membrane. It catalyses the reaction a plastoquinone + NADH + (n+1) H(+)(in) = a plastoquinol + NAD(+) + n H(+)(out). The enzyme catalyses a plastoquinone + NADPH + (n+1) H(+)(in) = a plastoquinol + NADP(+) + n H(+)(out). Its function is as follows. NDH shuttles electrons from NAD(P)H:plastoquinone, via FMN and iron-sulfur (Fe-S) centers, to quinones in the photosynthetic chain and possibly in a chloroplast respiratory chain. The immediate electron acceptor for the enzyme in this species is believed to be plastoquinone. Couples the redox reaction to proton translocation, and thus conserves the redox energy in a proton gradient. The protein is NAD(P)H-quinone oxidoreductase subunit 2 B, chloroplastic of Acorus calamus (Sweet flag).